A 327-amino-acid polypeptide reads, in one-letter code: 2-phosphoglycerate kinase (327 aa).

Basic and acidic residues predominate over residues 1 to 20; sequence MSEKSSRKERDEKTEKETAR. The interval 1–27 is disordered; that stretch reads MSEKSSRKERDEKTEKETARQGKHRRI. Residues 25–111 enclose the ATP-cone domain; the sequence is RRIRVKSRHY…LWRRIKKREE (87 aa).

Belongs to the 2-phosphoglycerate kinase family. The cofactor is a divalent metal cation.

The catalysed reaction is (2R)-2-phosphoglycerate + ATP = (2R)-2,3-bisphosphoglycerate + ADP + H(+). Its pathway is thermoadapter biosynthesis; cyclic 2,3-diphosphoglycerate biosynthesis; cyclic 2,3-diphosphoglycerate from 2-phospho-D-glycerate: step 1/2. In terms of biological role, catalyzes the phosphorylation of 2-phosphoglycerate to 2,3-diphosphoglycerate. Involved in the biosynthesis of cyclic 2,3-bisphosphoglycerate, a thermoprotectant. This chain is 2-phosphoglycerate kinase, found in Methanopyrus kandleri (strain AV19 / DSM 6324 / JCM 9639 / NBRC 100938).